The primary structure comprises 195 residues: Sec-independent protein translocase protein TatB (195 aa).

The helical transmembrane segment at 1–21 (MFDIGFSELALIAVVALVVLG) threads the bilayer. Residues 130-195 (EPGSAQPHTP…SSTSPQEKTP (66 aa)) are disordered. 2 stretches are compositionally biased toward low complexity: residues 145 to 157 (PVVA…APAP) and 175 to 195 (TTHA…EKTP).

This sequence belongs to the TatB family. In terms of assembly, the Tat system comprises two distinct complexes: a TatABC complex, containing multiple copies of TatA, TatB and TatC subunits, and a separate TatA complex, containing only TatA subunits. Substrates initially bind to the TatABC complex, which probably triggers association of the separate TatA complex to form the active translocon.

The protein resides in the cell inner membrane. In terms of biological role, part of the twin-arginine translocation (Tat) system that transports large folded proteins containing a characteristic twin-arginine motif in their signal peptide across membranes. Together with TatC, TatB is part of a receptor directly interacting with Tat signal peptides. TatB may form an oligomeric binding site that transiently accommodates folded Tat precursor proteins before their translocation. In Xanthomonas campestris pv. campestris (strain 8004), this protein is Sec-independent protein translocase protein TatB.